A 329-amino-acid polypeptide reads, in one-letter code: Taste receptor type 2 member 102 (329 aa).

Residues 1 to 9 (MNMESVLHN) are Extracellular-facing. Residues 10 to 30 (FATVLIYVEFIFGNLSNGFIV) form a helical membrane-spanning segment. At 31–47 (LSNFLDWVIKQKLSLID) the chain is on the cytoplasmic side. The chain crosses the membrane as a helical span at residues 48–68 (KILLTLAISRITLIWEIYAWF). At 69 to 85 (KSLYDPSSFLIGIEFQI) the chain is on the extracellular side. The helical transmembrane segment at 86-108 (IYFSWVLSSHFSLWLATTLSVFY) threads the bilayer. At 109–129 (LLRIANCSWQIFLYLKWRLKQ) the chain is on the cytoplasmic side. A helical membrane pass occupies residues 130–150 (LIVGMLLGSLVFLLGNLMQSM). Residues 151 to 181 (LEERFYQYGRNTSVNTMSNDLAMWTELIFFN) are Extracellular-facing. Asparagine 161 carries an N-linked (GlcNAc...) asparagine glycan. The helical transmembrane segment at 182-202 (MAMFSVIPFTLALISFLLLIF) threads the bilayer. The Cytoplasmic segment spans residues 203-231 (SLWKHLQKMQLISRRHRDPSTKAHMNALR). A helical transmembrane segment spans residues 232-252 (IMVSFLLLYTMHFLSLLISWI). Residues 253–262 (AQKHQSELAD) are Extracellular-facing. The chain crosses the membrane as a helical span at residues 263–283 (IIGMITELMYPSVHSCILILG). The Cytoplasmic portion of the chain corresponds to 284–329 (NSKLKQTSLCMLRHLRCRLKGENITIAYSNQITSFCVFCVANKSMR).

This sequence belongs to the G-protein coupled receptor T2R family.

It localises to the membrane. Functionally, putative taste receptor which may play a role in the perception of bitterness. This chain is Taste receptor type 2 member 102, found in Mus musculus (Mouse).